The following is a 49-amino-acid chain: Large ribosomal subunit protein bL33 (49 aa).

The protein belongs to the bacterial ribosomal protein bL33 family.

The chain is Large ribosomal subunit protein bL33 from Streptococcus pyogenes serotype M18 (strain MGAS8232).